We begin with the raw amino-acid sequence, 393 residues long: Formate-dependent phosphoribosylglycinamide formyltransferase (393 aa).

N(1)-(5-phospho-beta-D-ribosyl)glycinamide-binding positions include 22 to 23 (EL) and Glu-82. ATP contacts are provided by residues Arg-114, Lys-155, 160–165 (SSGHGQ), 195–198 (EGFI), and Glu-203. The region spanning 119–308 (RLAAEELGLK…QFALHARAIL (190 aa)) is the ATP-grasp domain. Residues Glu-267 and Glu-279 each coordinate Mg(2+). Residues Asp-286, Lys-356, and 363-364 (RR) each bind N(1)-(5-phospho-beta-D-ribosyl)glycinamide.

It belongs to the PurK/PurT family. In terms of assembly, homodimer.

The enzyme catalyses N(1)-(5-phospho-beta-D-ribosyl)glycinamide + formate + ATP = N(2)-formyl-N(1)-(5-phospho-beta-D-ribosyl)glycinamide + ADP + phosphate + H(+). It participates in purine metabolism; IMP biosynthesis via de novo pathway; N(2)-formyl-N(1)-(5-phospho-D-ribosyl)glycinamide from N(1)-(5-phospho-D-ribosyl)glycinamide (formate route): step 1/1. Its function is as follows. Involved in the de novo purine biosynthesis. Catalyzes the transfer of formate to 5-phospho-ribosyl-glycinamide (GAR), producing 5-phospho-ribosyl-N-formylglycinamide (FGAR). Formate is provided by PurU via hydrolysis of 10-formyl-tetrahydrofolate. This chain is Formate-dependent phosphoribosylglycinamide formyltransferase, found in Actinobacillus pleuropneumoniae serotype 5b (strain L20).